We begin with the raw amino-acid sequence, 277 residues long: Phosphoenolpyruvate synthase regulatory protein (277 aa).

Gly-157 to Thr-164 is a binding site for ADP.

The protein belongs to the pyruvate, phosphate/water dikinase regulatory protein family. PSRP subfamily.

The catalysed reaction is [pyruvate, water dikinase] + ADP = [pyruvate, water dikinase]-phosphate + AMP + H(+). It catalyses the reaction [pyruvate, water dikinase]-phosphate + phosphate + H(+) = [pyruvate, water dikinase] + diphosphate. Bifunctional serine/threonine kinase and phosphorylase involved in the regulation of the phosphoenolpyruvate synthase (PEPS) by catalyzing its phosphorylation/dephosphorylation. This is Phosphoenolpyruvate synthase regulatory protein from Salmonella agona (strain SL483).